The sequence spans 431 residues: Interleukin-11 receptor subunit alpha (431 aa).

Residues 1-23 (MSSSRSGLTRVLVAVATALVSSS) form the signal peptide. The Extracellular segment spans residues 24 to 371 (TPCPQAWGPP…DPLEQVAVLA (348 aa)). Positions 27–110 (PQAWGPPGVQ…FGGMVTLKLG (84 aa)) constitute an Ig-like C2-type domain. Intrachain disulfides connect Cys48–Cys94, Cys120–Cys130, and Cys170–Cys180. 2 Fibronectin type-III domains span residues 112-219 (PPAR…LRPD) and 220-317 (PPQG…TPST). An N-linked (GlcNAc...) asparagine glycan is attached at Asn127. The segment at 151–170 (KTLPGAESQRESPSTGPWPC) is disordered. Asn194 carries an N-linked (GlcNAc...) asparagine glycan. Positions 304–308 (WSAWS) match the WSXWS motif motif. The tract at residues 310–360 (EAWGTPSTGPLRDEVPDGSRGHEQKLEAAAQEDSPAPPSPSLQPDPRPLDH) is disordered. Basic and acidic residues predominate over residues 320-335 (LRDEVPDGSRGHEQKL). Pro residues predominate over residues 344–355 (PAPPSPSLQPDP). A helical membrane pass occupies residues 372–392 (SLGIFSFLGLAVGALALGLWL). Over 393-431 (RLRRSGKDGPQKPGFLAPMIPGDKLPGIPNLQRTPENFS) the chain is Cytoplasmic. A disordered region spans residues 402–431 (PQKPGFLAPMIPGDKLPGIPNLQRTPENFS).

The protein belongs to the type I cytokine receptor family. Type 3 subfamily. In terms of assembly, on IL11 binding, forms a multimer complex with IL6ST/gp130. In terms of processing, a short soluble form is also released from the membrane by proteolysis. The sIL11RA is formed either by limited proteolysis of membrane-bound receptors, a process referred to as ectodomain shedding, or directly secreted from the cells after alternative mRNA splicing. mIL11RA is cleaved by the proteases ADAM10, ELANE and PRTN3.

The protein resides in the membrane. Its subcellular location is the secreted. Functionally, receptor for interleukin-11 (IL11). The receptor systems for IL6, LIF, OSM, CNTF, IL11 and CT1 can utilize IL6ST for initiating signal transmission. The IL11/IL11RA/IL6ST complex may be involved in the control of proliferation and/or differentiation of skeletogenic progenitor or other mesenchymal cells. Essential for the normal development of craniofacial bones and teeth. Restricts suture fusion and tooth number. Soluble form of IL11 receptor (sIL11RA) that acts as an agonist of IL11 activity. The IL11:sIL11RA complex binds to IL6ST/gp130 on cell surfaces and induces signaling also on cells that do not express membrane-bound IL11RA in a process called IL11 trans-signaling. In Rattus norvegicus (Rat), this protein is Interleukin-11 receptor subunit alpha.